A 288-amino-acid chain; its full sequence is Proteasome subunit beta (288 aa).

A propeptide spans 1-60 (MESNADWGSRGGLPQAFLTPGISSFSEFLKGFAPEYLPSGRPLPGGLGSASAAGDIAPHG) (removed in mature form; by autocatalysis). The active-site Nucleophile is T61.

It belongs to the peptidase T1B family. The 20S proteasome core is composed of 14 alpha and 14 beta subunits that assemble into four stacked heptameric rings, resulting in a barrel-shaped structure. The two inner rings, each composed of seven catalytic beta subunits, are sandwiched by two outer rings, each composed of seven alpha subunits. The catalytic chamber with the active sites is on the inside of the barrel. Has a gated structure, the ends of the cylinder being occluded by the N-termini of the alpha-subunits. Is capped by the proteasome-associated ATPase, ARC.

It is found in the cytoplasm. The catalysed reaction is Cleavage of peptide bonds with very broad specificity.. The protein operates within protein degradation; proteasomal Pup-dependent pathway. With respect to regulation, the formation of the proteasomal ATPase ARC-20S proteasome complex, likely via the docking of the C-termini of ARC into the intersubunit pockets in the alpha-rings, may trigger opening of the gate for substrate entry. Interconversion between the open-gate and close-gate conformations leads to a dynamic regulation of the 20S proteasome proteolysis activity. Component of the proteasome core, a large protease complex with broad specificity involved in protein degradation. The polypeptide is Proteasome subunit beta (Catenulispora acidiphila (strain DSM 44928 / JCM 14897 / NBRC 102108 / NRRL B-24433 / ID139908)).